We begin with the raw amino-acid sequence, 133 residues long: Small ribosomal subunit protein uS8 (133 aa).

It belongs to the universal ribosomal protein uS8 family. Part of the 30S ribosomal subunit. Contacts proteins S5 and S12.

One of the primary rRNA binding proteins, it binds directly to 16S rRNA central domain where it helps coordinate assembly of the platform of the 30S subunit. This Synechococcus elongatus (strain ATCC 33912 / PCC 7942 / FACHB-805) (Anacystis nidulans R2) protein is Small ribosomal subunit protein uS8.